A 645-amino-acid chain; its full sequence is Minor extracellular protease Epr (645 aa).

A signal peptide spans 1 to 27; the sequence is MKNMSCKLVVSVTLFFSFLTIGPLAHA. Residues 28–103 constitute a propeptide that is removed on maturation; the sequence is QNSSEKEVIV…AADSTDFKVL (76 aa). The region spanning 115–382 is the Peptidase S8 domain; the sequence is QWNLEPIQVK…YGLIQYKAQA (268 aa). Active-site charge relay system residues include Asp-142, His-172, and Ser-326. Disordered regions lie at residues 490–577 and 591–645; these read KQAK…KTAL and AEAK…KPKK. Over residues 491-508 the composition is skewed to basic and acidic residues; it reads QAKDKVAKAEKSKKKTDV. Residues 522–547 are compositionally biased toward polar residues; that stretch reads SEKTSLQKRLNKVKSTNLKTAQQSVS. Basic and acidic residues predominate over residues 592–610; it reads EAKKVETAKAKVKKAEKDK.

This sequence belongs to the peptidase S8 family. Post-translationally, may undergo two steps of processing in its passage through the cell membrane: removal of the N-terminal signal sequence and cleavage of the C-terminal domain. Several active forms of Epr with molecular masses between 40 and 34 kDa were found in the medium of B.subtilis cultures. The size variation of the active forms expressed by the complete epr gene appears to be the result of partial removal of the C-terminus either by processing or degradation.

The protein localises to the secreted. Its subcellular location is the cell wall. Requires Ca(2+) for stability. Activity is inhibited by phenylmethylsulfonyl fluoride (PMSF) and EDTA. Its function is as follows. Serine protease. Involved in the production of the competence and sporulation stimulating factor CSF. In addition, is essential for swarming motility. Plays a key role in DegU-mediated swarming motility. The protease activity is dispensable for swarming. Not essential for growth or sporulation. In Bacillus subtilis (strain 168), this protein is Minor extracellular protease Epr.